A 1239-amino-acid polypeptide reads, in one-letter code: WD repeat-containing protein 11 (1239 aa).

WD repeat units follow at residues 63–112 (RHKA…AHCE), 115–158 (EHSK…KLWK), 358–398 (TKTV…SKSS), 476–515 (RMCP…LHKE), 571–610 (NDEP…LLRE), 713–750 (GSMG…SRGV), 752–792 (THRG…MVSS), 798–836 (NVNY…ASYR), and 898–944 (SLSN…IQAF). A disordered region spans residues 1213–1239 (EDLSQTEGTGTESSPADDTDNSLVNIE). Residues 1215–1226 (LSQTEGTGTESS) show a composition bias toward polar residues.

Component of the complex WDR11.

It localises to the cytoplasm. The protein resides in the cytoskeleton. Its subcellular location is the cilium basal body. The protein localises to the nucleus. It is found in the cilium axoneme. It localises to the cytoplasmic vesicle. The protein resides in the golgi apparatus. Its subcellular location is the trans-Golgi network. In terms of biological role, involved in the Hedgehog (Hh) signaling pathway, is essential for normal ciliogenesis. Regulates the proteolytic processing of gli3 and cooperates with the transcription factor emx1 in the induction of downstream Hh pathway gene expression and gonadotropin-releasing hormone production. WDR11 complex facilitates the tethering of Adaptor protein-1 complex (AP-1)-derived vesicles. The sequence is that of WD repeat-containing protein 11 (wdr11) from Danio rerio (Zebrafish).